Consider the following 340-residue polypeptide: GTPase Obg (340 aa).

An Obg domain is found at 1-159; it reads MKFLDQAKVY…RTLWLRLKLI (159 aa). Residues 160–327 enclose the OBG-type G domain; it reads ADAGIIGLPN…LLRAGAHIIE (168 aa). Residues 166 to 173, 191 to 195, 212 to 215, 279 to 282, and 308 to 310 contribute to the GTP site; these read GLPNAGKS, FTTLY, DIPG, SQID, and SAV. Positions 173 and 193 each coordinate Mg(2+).

This sequence belongs to the TRAFAC class OBG-HflX-like GTPase superfamily. OBG GTPase family. In terms of assembly, monomer. It depends on Mg(2+) as a cofactor.

The protein resides in the cytoplasm. An essential GTPase which binds GTP, GDP and possibly (p)ppGpp with moderate affinity, with high nucleotide exchange rates and a fairly low GTP hydrolysis rate. Plays a role in control of the cell cycle, stress response, ribosome biogenesis and in those bacteria that undergo differentiation, in morphogenesis control. This Bartonella henselae (strain ATCC 49882 / DSM 28221 / CCUG 30454 / Houston 1) (Rochalimaea henselae) protein is GTPase Obg.